Consider the following 182-residue polypeptide: Large ribosomal subunit protein uL5 (182 aa).

Belongs to the universal ribosomal protein uL5 family. In terms of assembly, part of the 50S ribosomal subunit; part of the 5S rRNA/L5/L18/L25 subcomplex. Contacts the 5S rRNA and the P site tRNA. Forms a bridge to the 30S subunit in the 70S ribosome.

Its function is as follows. This is one of the proteins that bind and probably mediate the attachment of the 5S RNA into the large ribosomal subunit, where it forms part of the central protuberance. In the 70S ribosome it contacts protein S13 of the 30S subunit (bridge B1b), connecting the 2 subunits; this bridge is implicated in subunit movement. Contacts the P site tRNA; the 5S rRNA and some of its associated proteins might help stabilize positioning of ribosome-bound tRNAs. The polypeptide is Large ribosomal subunit protein uL5 (Coxiella burnetii (strain CbuK_Q154) (Coxiella burnetii (strain Q154))).